The chain runs to 121 residues: Small ribosomal subunit protein uS13 (121 aa).

The segment at Gly-94–Lys-121 is disordered. Positions Ala-106–Lys-121 are enriched in basic residues.

This sequence belongs to the universal ribosomal protein uS13 family. In terms of assembly, part of the 30S ribosomal subunit. Forms a loose heterodimer with protein S19. Forms two bridges to the 50S subunit in the 70S ribosome.

Located at the top of the head of the 30S subunit, it contacts several helices of the 16S rRNA. In the 70S ribosome it contacts the 23S rRNA (bridge B1a) and protein L5 of the 50S subunit (bridge B1b), connecting the 2 subunits; these bridges are implicated in subunit movement. Contacts the tRNAs in the A and P-sites. This Geobacillus kaustophilus (strain HTA426) protein is Small ribosomal subunit protein uS13.